We begin with the raw amino-acid sequence, 281 residues long: Ribonuclease HII (281 aa).

Residues Met1–Ser46 form a disordered region. Over residues Pro33–Ser46 the composition is skewed to low complexity. The region spanning Trp73 to Gly261 is the RNase H type-2 domain. A divalent metal cation-binding residues include Asp79, Glu80, and Asp170.

It belongs to the RNase HII family. Mn(2+) serves as cofactor. Mg(2+) is required as a cofactor.

It is found in the cytoplasm. It catalyses the reaction Endonucleolytic cleavage to 5'-phosphomonoester.. In terms of biological role, endonuclease that specifically degrades the RNA of RNA-DNA hybrids. The chain is Ribonuclease HII from Rhodopseudomonas palustris (strain TIE-1).